The following is a 292-amino-acid chain: uncharacterized protein (292 aa).

NADP(+) is bound by residues Leu17, Asp55, Asn82, and Lys115. Ser134 serves as the catalytic Proton donor. Positions 148, 152, and 184 each coordinate NADP(+). The Proton acceptor role is filled by Tyr148. Lys152 serves as the catalytic Lowers pKa of active site Tyr.

The protein belongs to the short-chain dehydrogenases/reductases (SDR) family.

Its subcellular location is the cytoplasm. This is an uncharacterized protein from Schizosaccharomyces pombe (strain 972 / ATCC 24843) (Fission yeast).